A 544-amino-acid polypeptide reads, in one-letter code: Bacillolysin (544 aa).

The N-terminal stretch at 1-25 (MNKRAMLGAIGLAFGLMAWPFGASA) is a signal peptide. Positions 26-225 (KGKSMVWNEQ…DEAKPGGAQP (200 aa)) are cleaved as a propeptide — activation peptide. Ca(2+) contacts are provided by Asp285, Asp287, Gln289, and Asp366. Residue His370 participates in Zn(2+) binding. Glu371 is an active-site residue. 2 residues coordinate Zn(2+): His374 and Glu394. The Ca(2+) site is built by Glu405, Asn411, Asp413, Glu415, Glu418, Tyr421, Thr422, Val425, and Asp428. His459 acts as the Proton donor in catalysis.

It belongs to the peptidase M4 family. Requires Ca(2+) as cofactor. The cofactor is Zn(2+).

It localises to the secreted. It carries out the reaction Similar, but not identical, to that of thermolysin.. In terms of biological role, extracellular zinc metalloprotease. The chain is Bacillolysin (npr) from Bacillus caldolyticus.